We begin with the raw amino-acid sequence, 314 residues long: Formate-nitrite transporter (314 aa).

Topologically, residues 1–47 (MQKSTSKYVIDPISIKTNCSSEESYIRCVEYGKGKAHYRNLILLAKA) are cytoplasmic. A helical transmembrane segment spans residues 48–68 (ILAGVFVGVCAHASGIAGGLF). Topologically, residues 69 to 77 (YYHKLREYV) are extracellular. A helical transmembrane segment spans residues 78-98 (GISMSAFVYGFTFPIAFLCII). The Cytoplasmic portion of the chain corresponds to 99–128 (CTGSDLFTGNTLAVTTALLQKKLGLLCYMR). Residues 129–149 (VMCISLVGNYIGAVAFAFFVS) traverse the membrane as a helical segment. Topologically, residues 150–185 (YGSGAFSINTDTSKNHIFQFLNDIAIKKVSHSFIEC) are extracellular. A helical membrane pass occupies residues 186–206 (ICLAIGCNIFVCLAVYFVLSI). Topologically, residues 207–211 (KDGSG) are cytoplasmic. Residues 212–232 (LVFSVFFAVYAFAIAGYEHII) form a helical membrane-spanning segment. Topologically, residues 233-260 (ANIYTLNLALMISNDISFTQVYFKNLLP) are extracellular. The chain crosses the membrane as a helical span at residues 261-281 (TLIGNYIAGGLVLAFPLFFIY). Residues 282–314 (RSCYYDYDKMNDELNTVVLKTLSLELQNESNHI) lie on the Cytoplasmic side of the membrane.

Belongs to the FNT transporter (TC 1.A.16) family. Homopentamer.

The protein localises to the cell membrane. It is found in the vacuole membrane. The catalysed reaction is (S)-lactate(in) + H(+)(in) = (S)-lactate(out) + H(+)(out). It catalyses the reaction formate(in) + H(+)(in) = formate(out) + H(+)(out). It carries out the reaction pyruvate(out) + H(+)(out) = pyruvate(in) + H(+)(in). The enzyme catalyses acetate(out) + H(+)(out) = acetate(in) + H(+)(in). Its activity is regulated as follows. Inhibited by the Malaria Box compound MMV007839 and its derivatives BH296 and BH267.meta. Monocarboxylate-proton symporter that mediates the efflux of the waste product lactate in the intraerythrocytic parasites; active in acidic-to-neutral pH range. Transports L-lactate. This chain is Formate-nitrite transporter, found in Plasmodium malariae.